The following is a 744-amino-acid chain: 4'-phospho-dehydrooxetanocin synthase (744 aa).

Positions 119–259 (TVTLVNLCVI…KMLKKELKLD (141 aa)) constitute a B12-binding domain. Positions 135, 139, 184, 241, 242, and 308 each coordinate cob(II)alamin. Residues 299-545 (SKFRGALTLE…IVSYMLASME (247 aa)) enclose the Radical SAM core domain. Residues Cys-313, Cys-318, and Cys-321 each coordinate [4Fe-4S] cluster. Residues Pro-322, His-325, Lys-326, Ala-361, and Glu-363 each coordinate cob(II)alamin. Residues Glu-436 and Glu-545 each contribute to the S-adenosyl-L-methionine site.

The protein belongs to the radical SAM superfamily. [4Fe-4S] cluster serves as cofactor. Requires cob(II)alamin as cofactor.

The enzyme catalyses dAMP + S-adenosyl-L-methionine = 4'-phospho-dehydrooxetanocin + 5'-deoxyadenosine + L-methionine + H(+). The catalysed reaction is AH2 + 2 S-adenosyl-L-methionine = 2 5'-deoxyadenosin-5'-yl radical + 2 L-methionine + A + 2 H(+). It carries out the reaction 2 5'-deoxyadenosin-5'-yl radical + 2 dAMP + A = 2 4'-phospho-dehydrooxetanocin + 2 5'-deoxyadenosine + AH2. Requires OxsA for the oxidative ring contraction activity. Activation of OxsB requires its direct interaction with OxsA and is independent of OxsA phosphohydrolase activity. In contrast to ring contraction, methylation does not require the presence of OxsA. Isomerase involved in the biosynthesis of oxetanocin A (OXT-A), a nucleoside analog with antitumor, antiviral and antibacterial properties. Catalyzes an oxidative ring contraction of dAMP, forming an oxetane aldehyde. In addition, shows methyltransferase activity in vitro and is able to catalyze the radical mediated, stereoselective C2'-methylation of dAMP to form methylated 2'-dAMP. Also catalyzes the demethylation of S-adenosyl-L-methionine (SAM) to S-adenosyl-L-homocysteine (SAH). This is 4'-phospho-dehydrooxetanocin synthase from Priestia megaterium (Bacillus megaterium).